The chain runs to 138 residues: Large ribosomal subunit protein uL16 (138 aa).

Basic residues predominate over residues 1-16 (MLIPRRVKHRKQHHPG). The interval 1–25 (MLIPRRVKHRKQHHPGRSGAATGGT) is disordered.

Belongs to the universal ribosomal protein uL16 family. As to quaternary structure, part of the 50S ribosomal subunit.

Its function is as follows. Binds 23S rRNA and is also seen to make contacts with the A and possibly P site tRNAs. The protein is Large ribosomal subunit protein uL16 of Pseudarthrobacter chlorophenolicus (strain ATCC 700700 / DSM 12829 / CIP 107037 / JCM 12360 / KCTC 9906 / NCIMB 13794 / A6) (Arthrobacter chlorophenolicus).